A 186-amino-acid chain; its full sequence is Sec-independent protein translocase protein TatB (186 aa).

The helical transmembrane segment at 1-21 threads the bilayer; it reads MFDIGFSELILLMVLGLVVLG. The interval 120 to 186 is disordered; the sequence is NAEKSQNAIS…SKSQSSKTKS (67 aa). Residues 177–186 show a composition bias toward polar residues; it reads SKSQSSKTKS.

It belongs to the TatB family. The Tat system comprises two distinct complexes: a TatABC complex, containing multiple copies of TatA, TatB and TatC subunits, and a separate TatA complex, containing only TatA subunits. Substrates initially bind to the TatABC complex, which probably triggers association of the separate TatA complex to form the active translocon.

Its subcellular location is the cell inner membrane. In terms of biological role, part of the twin-arginine translocation (Tat) system that transports large folded proteins containing a characteristic twin-arginine motif in their signal peptide across membranes. Together with TatC, TatB is part of a receptor directly interacting with Tat signal peptides. TatB may form an oligomeric binding site that transiently accommodates folded Tat precursor proteins before their translocation. The chain is Sec-independent protein translocase protein TatB from Haemophilus influenzae (strain ATCC 51907 / DSM 11121 / KW20 / Rd).